The following is a 556-amino-acid chain: MQFDYIIIGAGSAGNVLATRLTEDPNTTVLLLEAGGPDYRFDFRTQMPAALAFPLQGKRYNWAYETEPEPFMNNRRMECGRGKGLGGSSLINGMCYIRGNALDLDNWAQEPGLENWSYLDCLPYYRKAETRDVGENDYHGGDGPVSVTTSKPGVNPLFEAMIEAGVQAGYPRTDDLNGYQQEGFGPMDRTVTPHGRRASTARGYLDQAKSRPNLTIRTHAMTDHIIFDGKRAVGVEWLEGDSTIPTRATANKEVLLCAGAIASPQILQRSGVGSAELLAEFDIPLVHDLPGVGENLQDHLEMYLQYECKEPVSLYPALQWWNQPKIGAEWLFGGTGVGASNHFEAGGFIRSREEFAWPNIQYHFLPVAINYNGSNAVKEHGFQCHVGSMRSPSRGHVRIKSRDPHQHPAILFNYMSHEQDWQEFRDAIRITREIMHQPALDQYRGREISPGVECQTDEQLDEFVRNHAETAFHPCGTCKMGYDEMAVVDGEGRVHGLEGLRVVDASIMPQIITGNLNATTIMIGEKMADMIRGKDALPRSTAGYYVANGRPVRAKK.

Position 4-33 (4-33 (DYIIIGAGSAGNVLATRLTEDPNTTVLLLE)) interacts with FAD. The active-site Proton acceptor is the H473.

Belongs to the GMC oxidoreductase family. Requires FAD as cofactor.

The catalysed reaction is choline + A = betaine aldehyde + AH2. It catalyses the reaction betaine aldehyde + NAD(+) + H2O = glycine betaine + NADH + 2 H(+). It functions in the pathway amine and polyamine biosynthesis; betaine biosynthesis via choline pathway; betaine aldehyde from choline (cytochrome c reductase route): step 1/1. Its function is as follows. Involved in the biosynthesis of the osmoprotectant glycine betaine. Catalyzes the oxidation of choline to betaine aldehyde and betaine aldehyde to glycine betaine at the same rate. The polypeptide is Oxygen-dependent choline dehydrogenase (Escherichia coli O17:K52:H18 (strain UMN026 / ExPEC)).